The following is a 540-amino-acid chain: Glucose-6-phosphate isomerase (540 aa).

The active-site Proton donor is the Glu350. Residues His381 and Lys503 contribute to the active site.

It belongs to the GPI family.

It localises to the cytoplasm. It carries out the reaction alpha-D-glucose 6-phosphate = beta-D-fructose 6-phosphate. The protein operates within carbohydrate biosynthesis; gluconeogenesis. It participates in carbohydrate degradation; glycolysis; D-glyceraldehyde 3-phosphate and glycerone phosphate from D-glucose: step 2/4. In terms of biological role, catalyzes the reversible isomerization of glucose-6-phosphate to fructose-6-phosphate. The polypeptide is Glucose-6-phosphate isomerase (Burkholderia pseudomallei (strain 1710b)).